The chain runs to 128 residues: Large ribosomal subunit protein bL17 (128 aa).

Belongs to the bacterial ribosomal protein bL17 family. As to quaternary structure, part of the 50S ribosomal subunit. Contacts protein L32.

The sequence is that of Large ribosomal subunit protein bL17 from Streptococcus equi subsp. equi (strain 4047).